The primary structure comprises 189 residues: Probable pericyclase scpY (189 aa).

This sequence belongs to the pericyclase pydY family.

The protein operates within mycotoxin biosynthesis. In terms of biological role, probable pericyclase; part of the gene scp cluster that mediates the biosynthesis of a hirsutellone-like compound that has still to be identified. The chain is Probable pericyclase scpY from Mollisia scopiformis (Conifer needle endophyte fungus).